Reading from the N-terminus, the 505-residue chain is MKFTINFSANLTAFLLSVFLSVWMTPFIVKTLGVEAFGFVHLTQNVINYFSVITVALSSVVVRFFSVAAHRGEREKANAYISNYLAASVLISLLLLLPLAGSAFFIDRVMNVPQALLADVRLSILIGSVLFILTFLMAGFGAAPFYANRLYITSSIQAVQMLIRVLSVLLLFACFAPKIWQIQLAALAGAVIASVLSFYFFKKLIPWFSFRMKDLSFRTSKELFQAGAWSSVNQIGVLLFLQIDLLTANLMLGASASGKYAAIIQFPLLLRSLAGTVASLFAPIMTSYYSKGDMEGLMNYANKAVRLNGLLLALPAALLGGLAGPFLTIWLGPSFSTIAPLLFIHAGYLVVSLAFMPLFYIWTAFNQQKTPAIVTLLLGAVNVVLAVTLSGPAHLGLYGITLAGAISLILKNAIFTPLYVSRITGYKKHVFLKGIIGPLSAAVFAWTVCKAIQFIVKIDSWPSLIATGVTVSFCYAVFAFMLVCTKEERQLVLKRFRKTKGAVNL.

Transmembrane regions (helical) follow at residues 9 to 29 (ANLT…PFIV), 49 to 69 (YFSV…SVAA), 86 to 106 (AASV…AFFI), 122 to 142 (LSIL…GFGA), 156 to 176 (IQAV…ACFA), 181 to 201 (QIQL…FYFF), 235 to 255 (IGVL…LGAS), 261 to 281 (AAII…ASLF), 310 to 330 (LLLA…LTIW), 341 to 361 (LLFI…LFYI), 371 to 391 (PAIV…TLSG), 395 to 415 (LGLY…NAIF), 435 to 455 (IIGP…IQFI), and 464 to 484 (LIAT…MLVC).

It localises to the cell membrane. May be involved in the production of the exopolysaccharide (EPS) component of the extracellular matrix during biofilm formation. EPS is responsible for the adhesion of chains of cells into bundles. This is an uncharacterized protein from Bacillus subtilis (strain 168).